The primary structure comprises 472 residues: UDP-glycosyltransferase 2 (472 aa).

Residues S283, 348–349, 366–374, and 388–391 contribute to the UDP-alpha-D-glucose site; these read WA, HCGWNSVLE, and YAEQ.

It belongs to the UDP-glycosyltransferase family. Highly expressed in roots. Expressed in leaves and stems.

Glycosyltransferase that possesses isoflavonoids 4'-O- and 7-O-glucosyltransferase activities. Shows a successive glucosylation toward the acceptors producing their corresponding 4',7-O-diglucosides. Can use genistein, formononetin, daidzein, liquiritigenin and naringenin as substrates. Also shows a 3'-O-glucosylation activity in vitro. The protein is UDP-glycosyltransferase 2 of Pueraria montana var. lobata (Kudzu vine).